The following is a 166-amino-acid chain: Protein TIFY 11e (166 aa).

Residues Ala-65 to Ser-100 form the Tify domain. Positions Pro-123 to Tyr-148 match the Jas motif. The Nuclear localization signal signature appears at Ala-125–Arg-132.

Belongs to the TIFY/JAZ family. Post-translationally, ubiquitinated. Targeted for degradation by the SCF(COI1) E3 ubiquitin ligase-proteasome pathway during jasmonate signaling.

The protein resides in the nucleus. Functionally, repressor of jasmonate responses. This chain is Protein TIFY 11e, found in Oryza sativa subsp. japonica (Rice).